Here is a 305-residue protein sequence, read N- to C-terminus: Epoxyqueuosine reductase (305 aa).

Asp-128 (proton donor) is an active-site residue. The region spanning 170–202 (LSLTSDTPHAKYCGTCRKCLDICPTKAIVHPFV) is the 4Fe-4S ferredoxin-type domain. The [4Fe-4S] cluster site is built by Cys-182, Cys-185, Cys-188, Cys-192, Cys-208, Cys-236, Cys-239, and Cys-243.

Belongs to the QueG family. In terms of assembly, monomer. Cob(II)alamin serves as cofactor. Requires [4Fe-4S] cluster as cofactor.

It localises to the cytoplasm. It catalyses the reaction epoxyqueuosine(34) in tRNA + AH2 = queuosine(34) in tRNA + A + H2O. Its pathway is tRNA modification; tRNA-queuosine biosynthesis. Functionally, catalyzes the conversion of epoxyqueuosine (oQ) to queuosine (Q), which is a hypermodified base found in the wobble positions of tRNA(Asp), tRNA(Asn), tRNA(His) and tRNA(Tyr). This chain is Epoxyqueuosine reductase, found in Atelocyanobacterium thalassa (isolate ALOHA).